The following is a 94-amino-acid chain: Pyrimidine/purine nucleoside phosphorylase (94 aa).

It belongs to the nucleoside phosphorylase PpnP family.

The enzyme catalyses a purine D-ribonucleoside + phosphate = a purine nucleobase + alpha-D-ribose 1-phosphate. It carries out the reaction adenosine + phosphate = alpha-D-ribose 1-phosphate + adenine. The catalysed reaction is cytidine + phosphate = cytosine + alpha-D-ribose 1-phosphate. It catalyses the reaction guanosine + phosphate = alpha-D-ribose 1-phosphate + guanine. The enzyme catalyses inosine + phosphate = alpha-D-ribose 1-phosphate + hypoxanthine. It carries out the reaction thymidine + phosphate = 2-deoxy-alpha-D-ribose 1-phosphate + thymine. The catalysed reaction is uridine + phosphate = alpha-D-ribose 1-phosphate + uracil. It catalyses the reaction xanthosine + phosphate = alpha-D-ribose 1-phosphate + xanthine. Catalyzes the phosphorolysis of diverse nucleosides, yielding D-ribose 1-phosphate and the respective free bases. Can use uridine, adenosine, guanosine, cytidine, thymidine, inosine and xanthosine as substrates. Also catalyzes the reverse reactions. In Pseudomonas fluorescens (strain Pf0-1), this protein is Pyrimidine/purine nucleoside phosphorylase.